Here is a 219-residue protein sequence, read N- to C-terminus: 7-cyano-7-deazaguanine synthase 2 (219 aa).

An ATP-binding site is contributed by 8-18 (YSGGMDSFTAL). Zn(2+)-binding residues include Cys-185, Cys-193, Cys-196, and Cys-199.

This sequence belongs to the QueC family. Requires Zn(2+) as cofactor.

It carries out the reaction 7-carboxy-7-deazaguanine + NH4(+) + ATP = 7-cyano-7-deazaguanine + ADP + phosphate + H2O + H(+). It functions in the pathway purine metabolism; 7-cyano-7-deazaguanine biosynthesis. Its function is as follows. Catalyzes the ATP-dependent conversion of 7-carboxy-7-deazaguanine (CDG) to 7-cyano-7-deazaguanine (preQ(0)). This chain is 7-cyano-7-deazaguanine synthase 2, found in Colwellia psychrerythraea (strain 34H / ATCC BAA-681) (Vibrio psychroerythus).